We begin with the raw amino-acid sequence, 692 residues long: Elongation factor G (692 aa).

The tr-type G domain maps to 8-282; that stretch reads ENTRNIGIMA…AVIDYLPSPL (275 aa). Residues 17 to 24, 81 to 85, and 135 to 138 each bind GTP; these read AHIDAGKT, DTPGH, and NKMD.

This sequence belongs to the TRAFAC class translation factor GTPase superfamily. Classic translation factor GTPase family. EF-G/EF-2 subfamily.

Its subcellular location is the cytoplasm. Catalyzes the GTP-dependent ribosomal translocation step during translation elongation. During this step, the ribosome changes from the pre-translocational (PRE) to the post-translocational (POST) state as the newly formed A-site-bound peptidyl-tRNA and P-site-bound deacylated tRNA move to the P and E sites, respectively. Catalyzes the coordinated movement of the two tRNA molecules, the mRNA and conformational changes in the ribosome. The protein is Elongation factor G of Bacillus cereus (strain Q1).